The following is a 281-amino-acid chain: Rhomboid protease AarA (281 aa).

Helical transmembrane passes span F16–F36, M76–I96, F105–W125, I145–I165, Q185–V205, A208–P228, and V233–Y253. S150 acts as the Nucleophile in catalysis. H210 (charge relay system) is an active-site residue.

It belongs to the peptidase S54 family.

It localises to the cell membrane. It catalyses the reaction Cleaves type-1 transmembrane domains using a catalytic dyad composed of serine and histidine that are contributed by different transmembrane domains.. Rhomboid serine protease that catalyzes intramembrane proteolysis. Mediates quorum-sensing and the subsequent regulation of target genes via activation of the Tat protein export system. Catalyzes the proteolytic activation of TatA by removal of its N-terminal extension. In Providencia stuartii, this protein is Rhomboid protease AarA (aarA).